The following is an 835-amino-acid chain: uncharacterized protein (835 aa).

Disordered stretches follow at residues 1–38 (MKTS…VGSR), 317–477 (DFDL…QSGR), 489–668 (SLSK…IKRR), 721–750 (DLEN…VSSF), and 810–835 (QEQQ…ELMF). Composition is skewed to low complexity over residues 7–37 (STVP…TVGS), 328–351 (NNNN…TPTT), and 361–395 (SSTN…SGSS). 2 stretches are compositionally biased toward polar residues: residues 396-406 (IGNRTEVSSSI) and 415-424 (IIRSKSSLGT). Residues 432 to 442 (GGSGGGGGGGM) are compositionally biased toward gly residues. The segment covering 449–477 (PISKTPTTMITKTASSSSPNLATSTQSGR) has biased composition (polar residues). The segment covering 489 to 510 (SLSKQSSSSNLTRSLPPIIKSP) has biased composition (low complexity). Residues 511–521 (ISPPGPTPPAP) show a composition bias toward pro residues. Residues 522–629 (TLTKSKSTPS…STTSSATKKS (108 aa)) are compositionally biased toward low complexity. The span at 631-640 (ITKTNPTDEQ) shows a compositional bias: polar residues. 2 stretches are compositionally biased toward low complexity: residues 641-664 (TTTP…STSS) and 724-750 (NNNN…VSSF). Residues 826 to 835 (ILDEDDELMF) are compositionally biased toward acidic residues.

This is an uncharacterized protein from Dictyostelium discoideum (Social amoeba).